The following is a 2334-amino-acid chain: Centriolin (2334 aa).

A disordered region spans residues 1 to 70 (MKKGSERRLS…ESTVPLEPQQ (70 aa)). Residues 21 to 38 (PGPSSLRSSMRSRSLSPL) are compositionally biased toward low complexity. 4 LRR repeats span residues 126–147 (KLEV…DKLL), 148–169 (RLRE…ENMC), 170–191 (NLQK…FAKK), and 194–215 (SLRV…SKLK). In terms of domain architecture, LRRCT spans 228–266 (NPVVALPHYLQFIIFHLRSLESLEGQPVTTQDRQEAFER). Coiled-coil stretches lie at residues 265–343 (ERFS…VELT) and 437–800 (DLQL…LNHV). Disordered regions lie at residues 542–562 (DSLD…RGKE) and 751–771 (SLRD…ENNE). A Phosphoserine modification is found at Ser832. Residues 858 to 1102 (EKEEAQVRER…ITRLRDVLNL (245 aa)) are a coiled coil. 3 disordered regions span residues 1154–1198 (SKVS…PLPA), 1213–1245 (KSFS…VPPP), and 1338–1360 (LKSK…EEVD). Residues 1227–1238 (SQEESGLDDQEE) are compositionally biased toward acidic residues. The stretch at 1320-2169 (EHHNLENEVS…MRTLKSEVKD (850 aa)) forms a coiled coil. Residue Ser1478 is modified to Phosphoserine. A required for centrosome localization region spans residues 1951–2121 (MMFQKLQKER…ELVAQDNHER (171 aa)). The interval 1988–2334 (QKSRLKQLLT…PLEEPNSYRH (347 aa)) is sufficient for interaction with HOOK2. The span at 2291–2307 (TSTSTDSASSPSLPSLV) shows a compositional bias: low complexity. Positions 2291–2334 (TSTSTDSASSPSLPSLVEDSQHGHSQSSFQVLQVPLEEPNSYRH) are disordered.

In terms of assembly, interacts with HOOK2. Interacts with EXOC6 and SNAPIN. Associates with the exocyst complex. Highly expressed in liver.

The protein localises to the cytoplasm. It localises to the cytoskeleton. Its subcellular location is the microtubule organizing center. The protein resides in the centrosome. It is found in the midbody. The protein localises to the midbody ring. In terms of biological role, involved in cell cycle progression and cytokinesis. During the late steps of cytokinesis, anchors exocyst and SNARE complexes at the midbody, thereby allowing secretory vesicle-mediated abscission. The polypeptide is Centriolin (Cntrl) (Mus musculus (Mouse)).